Here is a 342-residue protein sequence, read N- to C-terminus: DNA-directed RNA polymerase subunit alpha (342 aa).

Positions 1-238 (MESLNVNAKN…DQLNMFVNFD (238 aa)) are alpha N-terminal domain (alpha-NTD). The interval 254-342 (FNKNLLRKVD…EMSKKLEEQI (89 aa)) is alpha C-terminal domain (alpha-CTD).

The protein belongs to the RNA polymerase alpha chain family. Homodimer. The RNAP catalytic core consists of 2 alpha, 1 beta, 1 beta' and 1 omega subunit. When a sigma factor is associated with the core the holoenzyme is formed, which can initiate transcription.

It carries out the reaction RNA(n) + a ribonucleoside 5'-triphosphate = RNA(n+1) + diphosphate. DNA-dependent RNA polymerase catalyzes the transcription of DNA into RNA using the four ribonucleoside triphosphates as substrates. The chain is DNA-directed RNA polymerase subunit alpha from Pelagibacter ubique (strain HTCC1062).